The following is a 321-amino-acid chain: ATP-dependent 6-phosphofructokinase (321 aa).

Glycine 10 is a binding site for ATP. 20–24 (RAVVR) lines the ADP pocket. ATP-binding positions include 71–72 (RD) and 101–104 (GEGT). Glutamate 102 provides a ligand contact to Mg(2+). 125–127 (TID) provides a ligand contact to substrate. Catalysis depends on aspartate 127, which acts as the Proton acceptor. Arginine 154 is a binding site for ADP. Substrate is bound by residues arginine 162 and 169-171 (MGR). ADP is bound by residues 185-187 (GAE) and 213-215 (KLH). Residues glutamate 222, arginine 246, and 252-255 (HIQR) each bind substrate.

This sequence belongs to the phosphofructokinase type A (PFKA) family. ATP-dependent PFK group I subfamily. Prokaryotic clade 'B1' sub-subfamily. In terms of assembly, homotetramer. Requires Mg(2+) as cofactor.

The protein localises to the cytoplasm. The catalysed reaction is beta-D-fructose 6-phosphate + ATP = beta-D-fructose 1,6-bisphosphate + ADP + H(+). The protein operates within carbohydrate degradation; glycolysis; D-glyceraldehyde 3-phosphate and glycerone phosphate from D-glucose: step 3/4. Allosterically activated by ADP and other diphosphonucleosides, and allosterically inhibited by phosphoenolpyruvate. Its function is as follows. Catalyzes the phosphorylation of D-fructose 6-phosphate to fructose 1,6-bisphosphate by ATP, the first committing step of glycolysis. The chain is ATP-dependent 6-phosphofructokinase from Aquifex aeolicus (strain VF5).